We begin with the raw amino-acid sequence, 367 residues long: 2-aminoethylphosphonate--pyruvate transaminase (367 aa).

Position 193 is an N6-(pyridoxal phosphate)lysine (K193).

The protein belongs to the class-V pyridoxal-phosphate-dependent aminotransferase family. PhnW subfamily. As to quaternary structure, homodimer. It depends on pyridoxal 5'-phosphate as a cofactor.

It catalyses the reaction (2-aminoethyl)phosphonate + pyruvate = phosphonoacetaldehyde + L-alanine. Involved in phosphonate degradation. In Vibrio vulnificus (strain YJ016), this protein is 2-aminoethylphosphonate--pyruvate transaminase.